We begin with the raw amino-acid sequence, 407 residues long: Betaine--homocysteine S-methyltransferase 1 (407 aa).

A Hcy-binding domain is found at 11-314 (KGILERLNSG…YHIRAIAEEL (304 aa)). 3 positions are modified to N6-succinyllysine: K40, K93, and K98. C217 contacts Zn(2+). N6-succinyllysine is present on residues K232 and K241. C299 and C300 together coordinate Zn(2+). S330 is subject to Phosphoserine. 2 positions are modified to N6-succinyllysine: K340 and K377.

Homotetramer. It depends on Zn(2+) as a cofactor.

It localises to the cytoplasm. The protein localises to the cytosol. The protein resides in the nucleus. It catalyses the reaction L-homocysteine + glycine betaine = N,N-dimethylglycine + L-methionine. It participates in amine and polyamine degradation; betaine degradation; sarcosine from betaine: step 1/2. It functions in the pathway amino-acid biosynthesis; L-methionine biosynthesis via de novo pathway; L-methionine from L-homocysteine (BhmT route): step 1/1. Functionally, involved in the regulation of homocysteine metabolism. Converts betaine and homocysteine to dimethylglycine and methionine, respectively. This reaction is also required for the irreversible oxidation of choline. The chain is Betaine--homocysteine S-methyltransferase 1 (BHMT) from Bos taurus (Bovine).